The chain runs to 272 residues: HMP-PP phosphatase (272 aa).

Asp-8 serves as the catalytic Nucleophile. Positions 8, 10, and 212 each coordinate Mg(2+).

It belongs to the HAD-like hydrolase superfamily. Cof family. It depends on Mg(2+) as a cofactor.

The catalysed reaction is 4-amino-2-methyl-5-(diphosphooxymethyl)pyrimidine + H2O = 4-amino-2-methyl-5-(phosphooxymethyl)pyrimidine + phosphate + H(+). Functionally, catalyzes the hydrolysis of 4-amino-2-methyl-5-hydroxymethylpyrimidine pyrophosphate (HMP-PP) to 4-amino-2-methyl-5-hydroxymethylpyrimidine phosphate (HMP-P). This chain is HMP-PP phosphatase, found in Escherichia coli (strain 55989 / EAEC).